Consider the following 532-residue polypeptide: Metal-staphylopine-binding protein CntA (532 aa).

Positions 1–20 (MRKLTKMSAMLLASGLILTG) are cleaved as a signal peptide. Cysteine 21 carries N-palmitoyl cysteine lipidation. Cysteine 21 is lipidated: S-diacylglycerol cysteine. Positions 165, 418, and 448 each coordinate staphylopine.

It belongs to the bacterial solute-binding protein 5 family. As to quaternary structure, the complex is composed of two ATP-binding proteins (CntD and CntF), two transmembrane proteins (CntB and CntC) and a solute-binding protein (CntA).

The protein resides in the cell membrane. With respect to regulation, nickel/cobalt import is reduced in the presence of zinc. Functionally, part of the ABC transporter complex CntABCDF (Opp1) involved in the uptake of metal in complex with the metallophore staphylopine (StP). Involved in the import of divalent metals ions such as nickel, cobalt and zinc. Binds the metal via the metallophore StP, and transfers the StP-metal complex to the membrane-bound permease. Binds one molecule of StP/metal. Binds StP/Co(2+) and StP/Ni(2+) tighter than StP/Zn(2+). Plays a major role in nickel/cobalt import in zinc-depleted conditions. Contributes to virulence. Required for full urease activity in vitro. In Staphylococcus aureus (strain NCTC 8325 / PS 47), this protein is Metal-staphylopine-binding protein CntA.